The primary structure comprises 103 residues: uncharacterized protein (103 aa).

This is an uncharacterized protein from Mycoplasma pneumoniae (strain ATCC 29342 / M129 / Subtype 1) (Mycoplasmoides pneumoniae).